Reading from the N-terminus, the 105-residue chain is uncharacterized protein (105 aa).

A helical membrane pass occupies residues 25 to 47 (AHSVTLLFGIFRSSPFLLLFLLI). The segment at 54–89 (GRGSQRMKKKRGRANPSENLRERADPTNGPAENGKK) is disordered.

Its subcellular location is the membrane. This is an uncharacterized protein from Saccharomyces cerevisiae (strain ATCC 204508 / S288c) (Baker's yeast).